The sequence spans 443 residues: C4-dicarboxylate transport protein (443 aa).

Helical transmembrane passes span 7–26, 46–63, 76–98, 140–162, 183–205, 218–240, and 350–372; these read SLYV…GALF, MVIA…VAHM, ALIY…MNVL, LVSA…FGFA, VVFV…AMAF, LGYL…LGLI, and FITL…ALIL. Residues 415 to 443 are disordered; that stretch reads GEDLPTTEPDVASEERGEGREIDSSRPVT. The span at 427 to 443 shows a compositional bias: basic and acidic residues; the sequence is SEERGEGREIDSSRPVT.

This sequence belongs to the dicarboxylate/amino acid:cation symporter (DAACS) (TC 2.A.23) family.

Its subcellular location is the cell membrane. In terms of biological role, responsible for the transport of dicarboxylates such as succinate, fumarate, and malate across the membrane. This Deinococcus radiodurans (strain ATCC 13939 / DSM 20539 / JCM 16871 / CCUG 27074 / LMG 4051 / NBRC 15346 / NCIMB 9279 / VKM B-1422 / R1) protein is C4-dicarboxylate transport protein (dctA).